A 246-amino-acid polypeptide reads, in one-letter code: 3-deoxy-manno-octulosonate cytidylyltransferase (246 aa).

The protein belongs to the KdsB family.

It is found in the cytoplasm. The catalysed reaction is 3-deoxy-alpha-D-manno-oct-2-ulosonate + CTP = CMP-3-deoxy-beta-D-manno-octulosonate + diphosphate. It functions in the pathway nucleotide-sugar biosynthesis; CMP-3-deoxy-D-manno-octulosonate biosynthesis; CMP-3-deoxy-D-manno-octulosonate from 3-deoxy-D-manno-octulosonate and CTP: step 1/1. It participates in bacterial outer membrane biogenesis; lipopolysaccharide biosynthesis. Activates KDO (a required 8-carbon sugar) for incorporation into bacterial lipopolysaccharide in Gram-negative bacteria. In Rickettsia conorii (strain ATCC VR-613 / Malish 7), this protein is 3-deoxy-manno-octulosonate cytidylyltransferase.